The sequence spans 408 residues: Phosphoenolpyruvate/phosphate translocator 1, chloroplastic (408 aa).

The transit peptide at methionine 1 to proline 66 directs the protein to the chloroplast. Transmembrane regions (helical) follow at residues threonine 105–tyrosine 125, isoleucine 139–isoleucine 159, isoleucine 165–leucine 185, proline 222–leucine 242, alanine 245–phenylalanine 262, isoleucine 283–leucine 303, and threonine 375–tyrosine 395. In terms of domain architecture, EamA spans isoleucine 124–serine 241.

The protein belongs to the TPT transporter family. PPT (TC 2.A.7.9) subfamily.

The protein localises to the plastid. It is found in the chloroplast membrane. Functionally, phosphoenolpyruvate/phosphate translocator that transports phosphoenolpyruvate (PEP) and dihydroxyacetone phosphate. This Oryza sativa subsp. japonica (Rice) protein is Phosphoenolpyruvate/phosphate translocator 1, chloroplastic (PPT1).